Here is a 223-residue protein sequence, read N- to C-terminus: Deoxyribose-phosphate aldolase (223 aa).

Aspartate 91 functions as the Proton donor/acceptor in the catalytic mechanism. Lysine 153 serves as the catalytic Schiff-base intermediate with acetaldehyde. Lysine 182 (proton donor/acceptor) is an active-site residue.

It belongs to the DeoC/FbaB aldolase family. DeoC type 1 subfamily.

The protein localises to the cytoplasm. The catalysed reaction is 2-deoxy-D-ribose 5-phosphate = D-glyceraldehyde 3-phosphate + acetaldehyde. The protein operates within carbohydrate degradation; 2-deoxy-D-ribose 1-phosphate degradation; D-glyceraldehyde 3-phosphate and acetaldehyde from 2-deoxy-alpha-D-ribose 1-phosphate: step 2/2. In terms of biological role, catalyzes a reversible aldol reaction between acetaldehyde and D-glyceraldehyde 3-phosphate to generate 2-deoxy-D-ribose 5-phosphate. This chain is Deoxyribose-phosphate aldolase, found in Streptococcus pyogenes serotype M1.